The sequence spans 95 residues: Large ribosomal subunit protein bL25 (95 aa).

The protein belongs to the bacterial ribosomal protein bL25 family. As to quaternary structure, part of the 50S ribosomal subunit; part of the 5S rRNA/L5/L18/L25 subcomplex. Contacts the 5S rRNA. Binds to the 5S rRNA independently of L5 and L18.

Functionally, this is one of the proteins that binds to the 5S RNA in the ribosome where it forms part of the central protuberance. This is Large ribosomal subunit protein bL25 from Aeromonas salmonicida (strain A449).